The sequence spans 67 residues: Prokaryotic ubiquitin-like protein Pup (67 aa).

The interval 1–36 (MPQQFEQPQAQQAATQEDDALATTQAAAQTESADQA) is disordered. Residues 23-61 (TTQAAAQTESADQADVLDDILDDIESTLETNAEEYVNSF) are ARC ATPase binding. Glu67 participates in a covalent cross-link: Isoglutamyl lysine isopeptide (Glu-Lys) (interchain with K-? in acceptor proteins).

It belongs to the prokaryotic ubiquitin-like protein family. In terms of assembly, strongly interacts with the proteasome-associated ATPase ARC through a hydrophobic interface; the interacting region of Pup lies in its C-terminal half. There is one Pup binding site per ARC hexamer ring.

The protein operates within protein degradation; proteasomal Pup-dependent pathway. Protein modifier that is covalently attached to lysine residues of substrate proteins, thereby targeting them for proteasomal degradation. The tagging system is termed pupylation. This chain is Prokaryotic ubiquitin-like protein Pup, found in Bifidobacterium longum (strain DJO10A).